A 101-amino-acid chain; its full sequence is Small ribosomal subunit protein uS14 (101 aa).

The protein belongs to the universal ribosomal protein uS14 family. In terms of assembly, part of the 30S ribosomal subunit. Contacts proteins S3 and S10.

In terms of biological role, binds 16S rRNA, required for the assembly of 30S particles and may also be responsible for determining the conformation of the 16S rRNA at the A site. The protein is Small ribosomal subunit protein uS14 of Pasteurella multocida (strain Pm70).